We begin with the raw amino-acid sequence, 586 residues long: U-box domain-containing protein 73 (586 aa).

The segment at 21 to 122 (KADMSGLQRS…AAGADDGPTR (102 aa)) is disordered. Residues 50–60 (RSAPTSPLRTP) show a composition bias toward low complexity. The U-box domain occupies 182–258 (PIPIAHDGTL…SAWCLDHSDL (77 aa)).

The catalysed reaction is S-ubiquitinyl-[E2 ubiquitin-conjugating enzyme]-L-cysteine + [acceptor protein]-L-lysine = [E2 ubiquitin-conjugating enzyme]-L-cysteine + N(6)-ubiquitinyl-[acceptor protein]-L-lysine.. Its pathway is protein modification; protein ubiquitination. Functionally, possesses E3 ubiquitin-protein ligase in vitro. This is U-box domain-containing protein 73 (PUB73) from Oryza sativa subsp. japonica (Rice).